Consider the following 460-residue polypeptide: Argininosuccinate lyase (460 aa).

The protein belongs to the lyase 1 family. Argininosuccinate lyase subfamily.

The protein resides in the cytoplasm. The enzyme catalyses 2-(N(omega)-L-arginino)succinate = fumarate + L-arginine. It functions in the pathway amino-acid biosynthesis; L-arginine biosynthesis; L-arginine from L-ornithine and carbamoyl phosphate: step 3/3. The sequence is that of Argininosuccinate lyase from Actinobacillus succinogenes (strain ATCC 55618 / DSM 22257 / CCUG 43843 / 130Z).